The following is a 144-amino-acid chain: MNFKYIVAVSFLIASAYARSVQNDEQSLSQRDVLEEESLREIRGIGGKILSGLKTALKGAAKELASTYLHRRRTAEEHEVMKRLEAVMRDLDSLDYPEEASERETRGFNQDEIANLFTKKEKRILGPVLSMVGSALGGLIKKIG.

A signal peptide spans 1-18 (MNFKYIVAVSFLIASAYA). 2 propeptides span residues 19–43 (RSVQNDEQSLSQRDVLEEESLREIR) and 74–123 (TAEE…KEKR). Ile-143 is modified (isoleucine amide).

It belongs to the bombinin family. In terms of tissue distribution, expressed by the skin glands.

The protein resides in the secreted. In terms of biological role, maximin-3 shows antibacterial activity against both Gram-positive and Gram-negative bacteria. It also shows antimicrobial activity against the fungus C.albicans, but not against A.flavus nor P.uticale. It has little hemolytic activity. It possess a significant cytotoxicity against tumor cell lines. It possess a significant anti-HIV activity. It shows high spermicidal activity. Maximin-H2 shows antibacterial activity against both Gram-positive and Gram-negative bacteria. It also shows antimicrobial activity against the fungus C.albicans. Shows strong hemolytic activity. This Bombina maxima (Giant fire-bellied toad) protein is Maximins 3/H2.